The primary structure comprises 735 residues: Two pore calcium channel protein 1B (735 aa).

Residues 1–76 (MEEYLLPGES…ELYFMFTRFD (76 aa)) lie on the Cytoplasmic side of the membrane. Residues 77-97 (FLWSLNYLALVVLNFFEKPLW) traverse the membrane as a helical segment. Over 98-125 (CSKHLAESCNNRDYYYLGELPFLTGAES) the chain is Extracellular. The helical transmembrane segment at 126 to 146 (LIFEGVTLLLLIIHILFPISY) threads the bilayer. Topologically, residues 147-161 (EGFNLYWRSLLNRLK) are cytoplasmic. The chain crosses the membrane as a helical span at residues 162 to 182 (VILLLILVADIVVYILLPADF). Residue tyrosine 183 is a topological domain, extracellular. A helical; Voltage-sensor membrane pass occupies residues 184 to 202 (YLPFRIAPYLRVVFFILNI). Residues 203 to 208 (RELRDS) are Cytoplasmic-facing. A helical transmembrane segment spans residues 209 to 229 (FFILAGMLGTYLNVVALSALF). Residues 230–248 (LLFSSWLAYVFFEDTRQGK) lie on the Extracellular side of the membrane. The pore-forming intramembrane region spans 249 to 263 (TTFTSYGTTLYQMFV). The Extracellular segment spans residues 264–286 (LFTTSNNPDVWIPAYKDSRWYCL). A helical transmembrane segment spans residues 287–307 (FFVLYVLLGVYFVTNLILAVV). The Cytoplasmic portion of the chain corresponds to 308 to 431 (YDSFKSELVK…ASEKLRGFIR (124 aa)). EF-hand domains follow at residues 325–360 (LRLRTLKKAFSLIDEANNGLLNEKQCTLLFEELNKY) and 366–401 (ISGDDFKSIFNELDDTGDFKINLEEFADLCSAIGLR). A helical transmembrane segment spans residues 432–452 (GATFEYIIVFVLLVNLVAVII). Over 453–470 (ETTLDIQNNSGQTFWQKV) the chain is Extracellular. Asparagine 460 carries an N-linked (GlcNAc...) asparagine glycan. Residues 471–491 (EFTFGWLYVIEMALKVYTYGF) form a helical membrane-spanning segment. Residues 492–501 (ENYWRDGQNR) are Cytoplasmic-facing. The chain crosses the membrane as a helical span at residues 502–522 (FDFIVTWVIVIGETTTFVAPD). Over 523–531 (DLTFLSNGE) the chain is Extracellular. A helical; Voltage-sensor transmembrane segment spans residues 532–549 (WIRYLLIARMLRLIRLLM). Residues 550–560 (HVERYRAFVAT) lie on the Cytoplasmic side of the membrane. Residues 561–581 (FLTLIPSLMPYLGTIFCILCF) traverse the membrane as a helical segment. The Extracellular segment spans residues 582–618 (YCSLGLQIFGGIVNTGNPNLAQTDLAGNDYLLFNFND). The pore-forming intramembrane region spans 619–633 (YPNGMVTLFNILVMG). Residues 634–654 (NWQVWMQSYKELTGTSWTYAY) are Extracellular-facing. Residues 655-675 (FVSFYLISVLWLLNLIVAFVL) form a helical membrane-spanning segment. Residues 676–735 (EAFQAEMDLEASARCVDGDDKEAKRERRRNVGTKTRSQRVDFLLHHMLRSELTECSNDNP) lie on the Cytoplasmic side of the membrane.

The protein belongs to the calcium channel alpha-1 subunit (TC 1.A.1.11) family. Two pore calcium channel subfamily. In terms of assembly, homodimer.

Its subcellular location is the membrane. Inhibited by Al(3+), La(3+) and Gd(3+). Up-regulated by H(2)O(2), cryptogein, salicylic acid (SA) and cold shock. Functions as a voltage-gated inward-rectifying Ca(2+) channel (VDCC) across the plasma membrane that mediates sucrose-induced Ca(2+) influx in autotrophically grown leaf cells. Acts as the major ROS-responsive Ca(2+) channel and is the possible target of Al-dependent inhibition. Plays a regulatory role in defense responses. The sequence is that of Two pore calcium channel protein 1B (TPC1B) from Nicotiana tabacum (Common tobacco).